The following is a 116-amino-acid chain: Large ribosomal subunit protein bL20 (116 aa).

It belongs to the bacterial ribosomal protein bL20 family.

Its function is as follows. Binds directly to 23S ribosomal RNA and is necessary for the in vitro assembly process of the 50S ribosomal subunit. It is not involved in the protein synthesizing functions of that subunit. This is Large ribosomal subunit protein bL20 from Nautilia profundicola (strain ATCC BAA-1463 / DSM 18972 / AmH).